Reading from the N-terminus, the 24-residue chain is SM-11044-binding protein (24 aa).

In terms of biological role, may mediate relaxation of depolarized colon tonus. It binds iodocyanopindolol and SM-11044. The sequence is that of SM-11044-binding protein from Rattus norvegicus (Rat).